A 317-amino-acid chain; its full sequence is Transaldolase (317 aa).

The active-site Schiff-base intermediate with substrate is Lys132.

Belongs to the transaldolase family. Type 1 subfamily. In terms of assembly, homodimer.

The protein resides in the cytoplasm. It carries out the reaction D-sedoheptulose 7-phosphate + D-glyceraldehyde 3-phosphate = D-erythrose 4-phosphate + beta-D-fructose 6-phosphate. It functions in the pathway carbohydrate degradation; pentose phosphate pathway; D-glyceraldehyde 3-phosphate and beta-D-fructose 6-phosphate from D-ribose 5-phosphate and D-xylulose 5-phosphate (non-oxidative stage): step 2/3. Functionally, transaldolase is important for the balance of metabolites in the pentose-phosphate pathway. The chain is Transaldolase from Shewanella denitrificans (strain OS217 / ATCC BAA-1090 / DSM 15013).